A 425-amino-acid polypeptide reads, in one-letter code: Serine--tRNA ligase 2 (425 aa).

T234–E236 contributes to the L-serine binding site. Residue R265–E267 participates in ATP binding. E288 is an L-serine binding site. ATP is bound at residue E352–S355. S388 serves as a coordination point for L-serine.

Belongs to the class-II aminoacyl-tRNA synthetase family. Type-1 seryl-tRNA synthetase subfamily. As to quaternary structure, homodimer. The tRNA molecule binds across the dimer.

The protein localises to the cytoplasm. It carries out the reaction tRNA(Ser) + L-serine + ATP = L-seryl-tRNA(Ser) + AMP + diphosphate + H(+). The enzyme catalyses tRNA(Sec) + L-serine + ATP = L-seryl-tRNA(Sec) + AMP + diphosphate + H(+). The protein operates within aminoacyl-tRNA biosynthesis; selenocysteinyl-tRNA(Sec) biosynthesis; L-seryl-tRNA(Sec) from L-serine and tRNA(Sec): step 1/1. Catalyzes the attachment of serine to tRNA(Ser). Is also able to aminoacylate tRNA(Sec) with serine, to form the misacylated tRNA L-seryl-tRNA(Sec), which will be further converted into selenocysteinyl-tRNA(Sec). The chain is Serine--tRNA ligase 2 from Clostridium acetobutylicum (strain ATCC 824 / DSM 792 / JCM 1419 / IAM 19013 / LMG 5710 / NBRC 13948 / NRRL B-527 / VKM B-1787 / 2291 / W).